The following is a 464-amino-acid chain: ATP synthase subunit beta 2 (464 aa).

Position 153-160 (153-160) interacts with ATP; it reads GGAGVGKT.

This sequence belongs to the ATPase alpha/beta chains family. As to quaternary structure, F-type ATPases have 2 components, CF(1) - the catalytic core - and CF(0) - the membrane proton channel. CF(1) has five subunits: alpha(3), beta(3), gamma(1), delta(1), epsilon(1). CF(0) has three main subunits: a(1), b(2) and c(9-12). The alpha and beta chains form an alternating ring which encloses part of the gamma chain. CF(1) is attached to CF(0) by a central stalk formed by the gamma and epsilon chains, while a peripheral stalk is formed by the delta and b chains.

The protein localises to the cell inner membrane. It catalyses the reaction ATP + H2O + 4 H(+)(in) = ADP + phosphate + 5 H(+)(out). Produces ATP from ADP in the presence of a proton gradient across the membrane. The catalytic sites are hosted primarily by the beta subunits. In Paraburkholderia xenovorans (strain LB400), this protein is ATP synthase subunit beta 2.